An 85-amino-acid chain; its full sequence is Small ribosomal subunit protein bS16 (85 aa).

The protein belongs to the bacterial ribosomal protein bS16 family.

This is Small ribosomal subunit protein bS16 from Buchnera aphidicola subsp. Schizaphis graminum (strain Sg).